The primary structure comprises 212 residues: Imidazole glycerol phosphate synthase subunit HisH (212 aa).

The region spanning Met-1–Ala-212 is the Glutamine amidotransferase type-1 domain. The active-site Nucleophile is Cys-79. Residues His-187 and Glu-189 contribute to the active site.

As to quaternary structure, heterodimer of HisH and HisF.

It is found in the cytoplasm. The enzyme catalyses 5-[(5-phospho-1-deoxy-D-ribulos-1-ylimino)methylamino]-1-(5-phospho-beta-D-ribosyl)imidazole-4-carboxamide + L-glutamine = D-erythro-1-(imidazol-4-yl)glycerol 3-phosphate + 5-amino-1-(5-phospho-beta-D-ribosyl)imidazole-4-carboxamide + L-glutamate + H(+). It catalyses the reaction L-glutamine + H2O = L-glutamate + NH4(+). It functions in the pathway amino-acid biosynthesis; L-histidine biosynthesis; L-histidine from 5-phospho-alpha-D-ribose 1-diphosphate: step 5/9. Its function is as follows. IGPS catalyzes the conversion of PRFAR and glutamine to IGP, AICAR and glutamate. The HisH subunit catalyzes the hydrolysis of glutamine to glutamate and ammonia as part of the synthesis of IGP and AICAR. The resulting ammonia molecule is channeled to the active site of HisF. In Nitratidesulfovibrio vulgaris (strain DSM 19637 / Miyazaki F) (Desulfovibrio vulgaris), this protein is Imidazole glycerol phosphate synthase subunit HisH.